The sequence spans 255 residues: Thiazole synthase (255 aa).

The active-site Schiff-base intermediate with DXP is the K96. 1-deoxy-D-xylulose 5-phosphate contacts are provided by residues G157, 183-184 (AG), and 205-206 (NT).

Belongs to the ThiG family. Homotetramer. Forms heterodimers with either ThiH or ThiS.

It localises to the cytoplasm. The enzyme catalyses [ThiS sulfur-carrier protein]-C-terminal-Gly-aminoethanethioate + 2-iminoacetate + 1-deoxy-D-xylulose 5-phosphate = [ThiS sulfur-carrier protein]-C-terminal Gly-Gly + 2-[(2R,5Z)-2-carboxy-4-methylthiazol-5(2H)-ylidene]ethyl phosphate + 2 H2O + H(+). It participates in cofactor biosynthesis; thiamine diphosphate biosynthesis. Functionally, catalyzes the rearrangement of 1-deoxy-D-xylulose 5-phosphate (DXP) to produce the thiazole phosphate moiety of thiamine. Sulfur is provided by the thiocarboxylate moiety of the carrier protein ThiS. In vitro, sulfur can be provided by H(2)S. The chain is Thiazole synthase from Bacillus pumilus (strain SAFR-032).